Here is a 298-residue protein sequence, read N- to C-terminus: Protoheme IX farnesyltransferase (298 aa).

Helical transmembrane passes span 26–46 (VVSL…PGAV), 52–72 (LLGT…NCLV), 93–113 (VSVP…LFIL), 120–140 (LTMW…TVIL), 148–168 (IVIG…AITG), 174–194 (ALLL…ALAL), 219–239 (LHVL…YLTQ), 241–261 (SGLI…YYAI), and 278–298 (YSII…YFYF).

This sequence belongs to the UbiA prenyltransferase family. Protoheme IX farnesyltransferase subfamily.

Its subcellular location is the cell inner membrane. It carries out the reaction heme b + (2E,6E)-farnesyl diphosphate + H2O = Fe(II)-heme o + diphosphate. It functions in the pathway porphyrin-containing compound metabolism; heme O biosynthesis; heme O from protoheme: step 1/1. Functionally, converts heme B (protoheme IX) to heme O by substitution of the vinyl group on carbon 2 of heme B porphyrin ring with a hydroxyethyl farnesyl side group. The chain is Protoheme IX farnesyltransferase from Nitrosomonas eutropha (strain DSM 101675 / C91 / Nm57).